A 289-amino-acid polypeptide reads, in one-letter code: HTH-type transcriptional regulator CatR (289 aa).

The region spanning 1 to 57 (MELRHLRYFKVLAETLNFTRAAELLHIAQPPLSRQISQLEDQLGTLLVVRERPLRLT) is the HTH lysR-type domain. A DNA-binding region (H-T-H motif) is located at residues 18-37 (FTRAAELLHIAQPPLSRQIS).

It belongs to the LysR transcriptional regulatory family.

It localises to the cytoplasm. Its function is as follows. Positive regulator of the catBC operon that degrades catechol to acetyl-CoA. CatR binds in trans to the catR-catBC promoter-control region in the presence or absence of inducer but only activates the catBC operon in the presence of the inducer, cis-cis-muconate. This is HTH-type transcriptional regulator CatR (catR) from Pseudomonas putida (Arthrobacter siderocapsulatus).